The sequence spans 372 residues: Beta sliding clamp (372 aa).

Belongs to the beta sliding clamp family. Forms a ring-shaped head-to-tail homodimer around DNA which binds and tethers DNA polymerases and other proteins to the DNA. The DNA replisome complex has a single clamp-loading complex (3 tau and 1 each of delta, delta', psi and chi subunits) which binds 3 Pol III cores (1 core on the leading strand and 2 on the lagging strand) each with a beta sliding clamp dimer. Additional proteins in the replisome are other copies of gamma, psi and chi, Ssb, DNA helicase and RNA primase.

It localises to the cytoplasm. Confers DNA tethering and processivity to DNA polymerases and other proteins. Acts as a clamp, forming a ring around DNA (a reaction catalyzed by the clamp-loading complex) which diffuses in an ATP-independent manner freely and bidirectionally along dsDNA. Initially characterized for its ability to contact the catalytic subunit of DNA polymerase III (Pol III), a complex, multichain enzyme responsible for most of the replicative synthesis in bacteria; Pol III exhibits 3'-5' exonuclease proofreading activity. The beta chain is required for initiation of replication as well as for processivity of DNA replication. This chain is Beta sliding clamp (dnaN), found in Caulobacter vibrioides (strain ATCC 19089 / CIP 103742 / CB 15) (Caulobacter crescentus).